Reading from the N-terminus, the 312-residue chain is Ribosomal RNA small subunit methyltransferase H (312 aa).

Residues 32–34, D51, F78, D99, and Q106 each bind S-adenosyl-L-methionine; that span reads AGH.

Belongs to the methyltransferase superfamily. RsmH family.

Its subcellular location is the cytoplasm. The catalysed reaction is cytidine(1402) in 16S rRNA + S-adenosyl-L-methionine = N(4)-methylcytidine(1402) in 16S rRNA + S-adenosyl-L-homocysteine + H(+). Specifically methylates the N4 position of cytidine in position 1402 (C1402) of 16S rRNA. The chain is Ribosomal RNA small subunit methyltransferase H from Exiguobacterium sibiricum (strain DSM 17290 / CCUG 55495 / CIP 109462 / JCM 13490 / 255-15).